A 21-amino-acid chain; its full sequence is C-phycocyanin alpha subunit (21 aa).

Belongs to the phycobiliprotein family. As to quaternary structure, heterodimer of an alpha and a beta subunit, which further assembles into trimers and the trimers into hexamers. Contains one covalently linked bilin chromophore.

Its subcellular location is the cellular thylakoid membrane. In terms of biological role, light-harvesting photosynthetic bile pigment-protein from the phycobiliprotein complex (phycobilisome, PBS). Phycocyanin is the major phycobiliprotein in the PBS rod. This is C-phycocyanin alpha subunit from Anabaena sp. (strain L31).